The primary structure comprises 151 residues: UPF0178 protein GSU0171 (151 aa).

The protein belongs to the UPF0178 family.

In Geobacter sulfurreducens (strain ATCC 51573 / DSM 12127 / PCA), this protein is UPF0178 protein GSU0171.